The chain runs to 249 residues: Phosphoribosylaminoimidazole-succinocarboxamide synthase (249 aa).

Belongs to the SAICAR synthetase family.

The catalysed reaction is 5-amino-1-(5-phospho-D-ribosyl)imidazole-4-carboxylate + L-aspartate + ATP = (2S)-2-[5-amino-1-(5-phospho-beta-D-ribosyl)imidazole-4-carboxamido]succinate + ADP + phosphate + 2 H(+). It functions in the pathway purine metabolism; IMP biosynthesis via de novo pathway; 5-amino-1-(5-phospho-D-ribosyl)imidazole-4-carboxamide from 5-amino-1-(5-phospho-D-ribosyl)imidazole-4-carboxylate: step 1/2. This is Phosphoribosylaminoimidazole-succinocarboxamide synthase from Roseiflexus castenholzii (strain DSM 13941 / HLO8).